A 166-amino-acid chain; its full sequence is Large ribosomal subunit protein uL10 (166 aa).

This sequence belongs to the universal ribosomal protein uL10 family. Part of the ribosomal stalk of the 50S ribosomal subunit. The N-terminus interacts with L11 and the large rRNA to form the base of the stalk. The C-terminus forms an elongated spine to which L12 dimers bind in a sequential fashion forming a multimeric L10(L12)X complex.

Forms part of the ribosomal stalk, playing a central role in the interaction of the ribosome with GTP-bound translation factors. This chain is Large ribosomal subunit protein uL10, found in Aromatoleum aromaticum (strain DSM 19018 / LMG 30748 / EbN1) (Azoarcus sp. (strain EbN1)).